The chain runs to 203 residues: Abscisic acid receptor PYL5 (203 aa).

Residues 1–18 (MRSPVQLQHGSDATNGFH) show a composition bias toward polar residues. Residues 1–29 (MRSPVQLQHGSDATNGFHTLQPHDQTDGP) form a disordered region. Residues 51 to 201 (HDVGPDQCCS…NLQSLARSTN (151 aa)) form an START-like region. Abscisate contacts are provided by residues Lys-87, 117–122 (AVSSTE), 144–150 (RLKNYRS), and Glu-166. The short motif at 113 to 117 (SGLPA) is the Gate loop element. A Latch loop motif is present at residues 143–145 (HRL).

The protein belongs to the PYR/PYL/RCAR abscisic acid intracellular receptor family. Monomer. Homodimer. Binds ABA on one subunit only. Binds to CARs protein in an ABA-independent manner, both at the plasma membrane and in the nucleus. Binds both (-)-ABA and (+)-ABA. Interacts with HAB1, ABI1 and ABI2, and possibly with other PP2Cs.

It localises to the cytoplasm. The protein resides in the nucleus. Its subcellular location is the cell membrane. Its function is as follows. Receptor for abscisic acid (ABA) required for ABA-mediated responses such as stomatal closure and germination inhibition. Inhibits the activity of group-A protein phosphatases type 2C (PP2Cs) in an ABA-independent manner but more efficiently when activated by ABA. Confers enhanced sensitivity to ABA. Can be activated by both (-)-ABA and (+)-ABA. This Arabidopsis thaliana (Mouse-ear cress) protein is Abscisic acid receptor PYL5 (PYL5).